We begin with the raw amino-acid sequence, 410 residues long: E3 SUMO-protein ligase EGR2 (410 aa).

Positions 68–83 (PPASTTASSSVTSASP) are enriched in low complexity. Disordered regions lie at residues 68-95 (PPASTTASSSVTSASPNPLATGPLGVCT), 101-120 (PELDHLYSPPPPPPPYSGCT), and 127-151 (PSAFLSPPTTSTSSLAYQPPPSYPS). The HCFC1-binding-motif (HBM) motif lies at 104-107 (DHLY). Residues 127 to 143 (PSAFLSPPTTSTSSLAY) are compositionally biased toward low complexity. Position 188 is an N6-acetyllysine (lysine 188). Positions 217-286 (PSAGVTGPGA…PYPCPAEGCD (70 aa)) are disordered. Residues 222-231 (TGPGASGGSE) show a composition bias toward gly residues. The span at 237 to 248 (GSGSAAVTTSPY) shows a compositional bias: polar residues. 3 consecutive C2H2-type zinc fingers follow at residues 278-302 (YPCPAEGCDRRFSRSDELTRHIRIH), 308-330 (FQCRICMRNFSRSDHLTTHIRTH), and 336-358 (FACDYCGRKFARSDERKRHTKIH). The segment at 349–410 (DERKRHTKIH…LACTSRTRTP (62 aa)) is disordered. Residues 353-363 (RHTKIHLRQKE) are compositionally biased toward basic residues. Low complexity predominate over residues 367–380 (SAPSSSASAQPSAS).

Belongs to the EGR C2H2-type zinc-finger protein family. Interacts with HCFC1. Interacts with WWP2. Interacts with UBC9. Interacts with CITED1. Interacts (via phosphorylated form) with SFN. Post-translationally, ubiquitinated by WWP2 leading to proteasomal degradation. Acetylated. May be deacetylated by HDAC6, HDAC10 or SIRT1.

Its subcellular location is the nucleus. It participates in protein modification; protein sumoylation. Functionally, sequence-specific DNA-binding transcription factor. Plays a role in hindbrain segmentation by regulating the expression of a subset of homeobox containing genes and in Schwann cell myelination by regulating the expression of genes involved in the formation and maintenance of myelin. Binds to two EGR2-consensus sites EGR2A (5'-CTGTAGGAG-3') and EGR2B (5'-ATGTAGGTG-3') in the HOXB3 enhancer and promotes HOXB3 transcriptional activation. Binds to specific DNA sites located in the promoter region of HOXA4, HOXB2 and ERBB2. Regulates hindbrain segmentation by controlling the expression of Hox genes, such as HOXA4, HOXB3 and HOXB2, and thereby specifying odd and even rhombomeres. Promotes the expression of HOXB3 in the rhombomere r5 in the hindbrain. Regulates myelination in the peripheral nervous system after birth, possibly by regulating the expression of myelin proteins, such as MPZ, and by promoting the differentiation of Schwann cells. Involved in the development of the jaw openener musculature, probably by playing a role in its innervation through trigeminal motor neurons. May play a role in adipogenesis, possibly by regulating the expression of CEBPB. In terms of biological role, E3 SUMO-protein ligase helping SUMO1 conjugation to its coregulators NAB1 and NAB2, whose sumoylation down-regulates EGR2 transcriptional activity. In Cricetulus griseus (Chinese hamster), this protein is E3 SUMO-protein ligase EGR2 (EGR2).